A 444-amino-acid chain; its full sequence is Phosphoglucosamine mutase (444 aa).

Residue serine 100 is the Phosphoserine intermediate of the active site. Mg(2+) contacts are provided by serine 100, aspartate 234, aspartate 236, and aspartate 238. Phosphoserine is present on serine 100.

The protein belongs to the phosphohexose mutase family. Mg(2+) serves as cofactor. Activated by phosphorylation.

It catalyses the reaction alpha-D-glucosamine 1-phosphate = D-glucosamine 6-phosphate. In terms of biological role, catalyzes the conversion of glucosamine-6-phosphate to glucosamine-1-phosphate. The sequence is that of Phosphoglucosamine mutase from Rubrobacter xylanophilus (strain DSM 9941 / JCM 11954 / NBRC 16129 / PRD-1).